The primary structure comprises 448 residues: tRNA modification GTPase MnmE (448 aa).

Residues R22, E79, and K118 each contribute to the (6S)-5-formyl-5,6,7,8-tetrahydrofolate site. Positions 214-371 (GLHVVLAGQP…LRQELLRIAG (158 aa)) constitute a TrmE-type G domain. N224 is a K(+) binding site. GTP is bound by residues 224-229 (NVGKSS), 243-249 (TPIAGTT), and 268-271 (DTAG). S228 lines the Mg(2+) pocket. T243, I245, and T248 together coordinate K(+). T249 contacts Mg(2+). K448 is a binding site for (6S)-5-formyl-5,6,7,8-tetrahydrofolate.

The protein belongs to the TRAFAC class TrmE-Era-EngA-EngB-Septin-like GTPase superfamily. TrmE GTPase family. Homodimer. Heterotetramer of two MnmE and two MnmG subunits. K(+) is required as a cofactor.

It is found in the cytoplasm. Its function is as follows. Exhibits a very high intrinsic GTPase hydrolysis rate. Involved in the addition of a carboxymethylaminomethyl (cmnm) group at the wobble position (U34) of certain tRNAs, forming tRNA-cmnm(5)s(2)U34. This chain is tRNA modification GTPase MnmE, found in Dechloromonas aromatica (strain RCB).